Reading from the N-terminus, the 1038-residue chain is Probable LRR receptor-like serine/threonine-protein kinase At1g53430 (1038 aa).

The N-terminal stretch at methionine 1 to alanine 28 is a signal peptide. At glutamine 29–glycine 609 the chain is on the extracellular side. N-linked (GlcNAc...) asparagine glycans are attached at residues asparagine 48, asparagine 77, asparagine 85, asparagine 112, and asparagine 127. LRR repeat units follow at residues leucine 113–isoleucine 137, leucine 139–isoleucine 160, threonine 161–leucine 184, arginine 185–leucine 208, asparagine 210–leucine 234, and glutamate 236–leucine 256. Asparagine 196, asparagine 210, asparagine 231, asparagine 255, and asparagine 258 each carry an N-linked (GlcNAc...) asparagine glycan. LRR repeat units lie at residues leucine 259 to leucine 281, methionine 282 to methionine 305, serine 306 to asparagine 328, aspartate 330 to isoleucine 351, and asparagine 352 to glutamine 374. Residues asparagine 339, asparagine 363, asparagine 471, and asparagine 561 are each glycosylated (N-linked (GlcNAc...) asparagine). Residues alanine 610–leucine 630 traverse the membrane as a helical segment. Topologically, residues arginine 631–glutamate 1038 are cytoplasmic. Residue threonine 658 is modified to Phosphothreonine. The Protein kinase domain maps to phenylalanine 669–leucine 950. Residues isoleucine 675–valine 683 and lysine 697 each bind ATP. A Phosphotyrosine modification is found at tyrosine 742. The active-site Proton acceptor is the aspartate 795. Phosphoserine is present on serine 828. 2 positions are modified to phosphothreonine: threonine 829 and threonine 834. Phosphotyrosine is present on tyrosine 842. Residues arginine 984–glutamate 1038 are disordered. Positions lysine 1027 to glutamate 1038 are enriched in basic and acidic residues.

It belongs to the protein kinase superfamily. Ser/Thr protein kinase family.

It localises to the membrane. It catalyses the reaction L-seryl-[protein] + ATP = O-phospho-L-seryl-[protein] + ADP + H(+). It carries out the reaction L-threonyl-[protein] + ATP = O-phospho-L-threonyl-[protein] + ADP + H(+). This Arabidopsis thaliana (Mouse-ear cress) protein is Probable LRR receptor-like serine/threonine-protein kinase At1g53430.